Reading from the N-terminus, the 188-residue chain is Elongation factor P-like protein (188 aa).

Belongs to the elongation factor P family.

In Stenotrophomonas maltophilia (strain K279a), this protein is Elongation factor P-like protein.